Consider the following 383-residue polypeptide: MGASQKNQELIGGLILFSAALLAIVVNNSPLASYYAMLETINVKLGIENLVIDKNLMHWINDGLMAIYFLYIGLEIKREIIVGTLSKPSNIITPAIAAFAGLAMPSLIYLSINHDIKVINGWAIPSATDIAFTLAILALLGTRVPAKLKLLVITIAIFDDIAAIAIIAIFYTKSLSLLSLSLGTLFILAMIICNRIFKINRSSVYVVLGFFAWFCTIKSGVHATLAGFTTALCIPFRENDKDSPANFMEDSLHPWIIYFILPVFAFANAGISFSGISFSILFEPITLGIIWGLFVGKQLGIFSILAVFKKLKWFKLGESFSNLQLYGISLLCGIGFTMSLFIGVLAFNDTHLLNAIKIGVVVGSVLSGFFGYIVLRFIVTNPS.

The next 11 membrane-spanning stretches (helical) occupy residues 10–30, 56–76, 91–111, 121–141, 150–170, 174–194, 206–226, 254–274, 289–308, 327–347, and 355–375; these read LIGGLILFSAALLAIVVNNSP, LMHWINDGLMAIYFLYIGLEI, IITPAIAAFAGLAMPSLIYLS, GWAIPSATDIAFTLAILALLG, LLVITIAIFDDIAAIAIIAIF, SLSLLSLSLGTLFILAMIICN, VVLGFFAWFCTIKSGVHATLA, PWIIYFILPVFAFANAGISFS, IIWGLFVGKQLGIFSILAVF, GISLLCGIGFTMSLFIGVLAF, and AIKIGVVVGSVLSGFFGYIVL.

The protein belongs to the NhaA Na(+)/H(+) (TC 2.A.33) antiporter family.

The protein resides in the cell inner membrane. It carries out the reaction Na(+)(in) + 2 H(+)(out) = Na(+)(out) + 2 H(+)(in). In terms of biological role, na(+)/H(+) antiporter that extrudes sodium in exchange for external protons. In Francisella tularensis subsp. tularensis (strain WY96-3418), this protein is Na(+)/H(+) antiporter NhaA.